A 512-amino-acid polypeptide reads, in one-letter code: GMP synthase [glutamine-hydrolyzing] (512 aa).

The Glutamine amidotransferase type-1 domain maps to 7-197 (TIIVLDFGSQ…VFGVCGCSEG (191 aa)). Cys-84 (nucleophile) is an active-site residue. Catalysis depends on residues His-171 and Glu-173. Residues 198 to 387 (WNMENFIEVE…LGIPDEIVWR (190 aa)) enclose the GMPS ATP-PPase domain. 225–231 (SGGVDSS) serves as a coordination point for ATP.

As to quaternary structure, homodimer.

It catalyses the reaction XMP + L-glutamine + ATP + H2O = GMP + L-glutamate + AMP + diphosphate + 2 H(+). It participates in purine metabolism; GMP biosynthesis; GMP from XMP (L-Gln route): step 1/1. Functionally, catalyzes the synthesis of GMP from XMP. The polypeptide is GMP synthase [glutamine-hydrolyzing] (Bacillus anthracis).